A 451-amino-acid polypeptide reads, in one-letter code: uncharacterized protein (451 aa).

Residues 2–60 (NVVLKQRIPLKIKRMGINGEGIGFYKKTLIFVPGALKGEEVFCQISSVRRNFAEAKLLK) form the TRAM domain. 4 residues coordinate [4Fe-4S] cluster: Cys-73, Cys-79, Cys-82, and Cys-162. Residues Gln-283, Tyr-312, Asp-333, and Asp-381 each contribute to the S-adenosyl-L-methionine site. Catalysis depends on Cys-408, which acts as the Nucleophile.

This sequence belongs to the class I-like SAM-binding methyltransferase superfamily. RNA M5U methyltransferase family.

This is an uncharacterized protein from Streptococcus agalactiae serotype III (strain NEM316).